A 1032-amino-acid polypeptide reads, in one-letter code: Protein transport protein Sec24D (1032 aa).

The segment at 1 to 260 (MSQQGYVATP…GPPQPQKKLD (260 aa)) is disordered. A compositionally biased stretch (polar residues) spans 102-133 (PSAQSSYPGPISTSSVTQLGSQLSAMQINSYG). The span at 198 to 212 (GPPPPNAQYQPPPLP) shows a compositional bias: pro residues. S266 is subject to Phosphoserine. Positions 363, 366, 385, and 388 each coordinate Zn(2+). Residues 363-388 (CNRCKAYMCPFMQFIEGGRRYQCGFC) are zinc finger-like. Residues 901–974 (MLPAAVRCSE…PYSQQLRMIM (74 aa)) form a Gelsolin-like repeat.

This sequence belongs to the SEC23/SEC24 family. SEC24 subfamily. As to quaternary structure, COPII is composed of at least five proteins: the Sec23/24 complex, the Sec13/31 complex and Sar1. Interacts with TMED2 and TMED10. Interacts with CNIH4. Interacts with GOSR2 (via IxM motif) and STX5 (via IxM motif); recruits GOSR2 and STX5 into COPII-coated vesicles. Interacts with KCNA3; this interaction is reduced in the presence of KCNE4. In terms of tissue distribution, ubiquitously expressed, with higher amounts in placenta, pancreas, heart and liver.

It is found in the cytoplasmic vesicle. The protein localises to the COPII-coated vesicle membrane. Its subcellular location is the endoplasmic reticulum membrane. It localises to the cytoplasm. The protein resides in the cytosol. Component of the coat protein complex II (COPII) which promotes the formation of transport vesicles from the endoplasmic reticulum (ER). The coat has two main functions, the physical deformation of the endoplasmic reticulum membrane into vesicles and the selection of cargo molecules for their transport to the Golgi complex. Plays a central role in cargo selection within the COPII complex and together with SEC24C may have a different specificity compared to SEC24A and SEC24B. May more specifically package GPI-anchored proteins through the cargo receptor TMED10. May also be specific for IxM motif-containing cargos like the SNAREs GOSR2 and STX5. This is Protein transport protein Sec24D from Homo sapiens (Human).